Here is a 302-residue protein sequence, read N- to C-terminus: Sulfate adenylyltransferase subunit 2 (302 aa).

The protein belongs to the PAPS reductase family. CysD subfamily. Heterodimer composed of CysD, the smaller subunit, and CysN.

The catalysed reaction is sulfate + ATP + H(+) = adenosine 5'-phosphosulfate + diphosphate. Its pathway is sulfur metabolism; hydrogen sulfide biosynthesis; sulfite from sulfate: step 1/3. Functionally, with CysN forms the ATP sulfurylase (ATPS) that catalyzes the adenylation of sulfate producing adenosine 5'-phosphosulfate (APS) and diphosphate, the first enzymatic step in sulfur assimilation pathway. APS synthesis involves the formation of a high-energy phosphoric-sulfuric acid anhydride bond driven by GTP hydrolysis by CysN coupled to ATP hydrolysis by CysD. This is Sulfate adenylyltransferase subunit 2 from Salmonella schwarzengrund (strain CVM19633).